Consider the following 287-residue polypeptide: Pyridoxal kinase PdxY (287 aa).

Substrate is bound by residues serine 10 and 45-46; that span reads TQ. Residues aspartate 112, alanine 144, glutamate 149, lysine 182, and 209-212 contribute to the ATP site; that span reads RPLV. A substrate-binding site is contributed by aspartate 224.

This sequence belongs to the pyridoxine kinase family. PdxY subfamily. As to quaternary structure, homodimer. It depends on Mg(2+) as a cofactor.

The enzyme catalyses pyridoxal + ATP = pyridoxal 5'-phosphate + ADP + H(+). Its pathway is cofactor metabolism; pyridoxal 5'-phosphate salvage; pyridoxal 5'-phosphate from pyridoxal: step 1/1. Functionally, pyridoxal kinase involved in the salvage pathway of pyridoxal 5'-phosphate (PLP). Catalyzes the phosphorylation of pyridoxal to PLP. The protein is Pyridoxal kinase PdxY of Shigella boydii serotype 4 (strain Sb227).